The chain runs to 429 residues: MISRVFKLRMWAPVGVLTSLTYCLHQRRVALAEPGGADQQNPVDRNLLELKMVQVVFRHGARSPLKPLPQEDQQVEWKSQLLEVPPQTQLEYTVTNLAGGPKPHSPFDSQYHETTLKGGMFAGQLTKVGMEQMFALGERLRKNYVEDIPFLSPTFNPLEVFIRSTNIYRNLESTRCLLAGLFQRQKEGPIVIHTDEASSEVLYPNYQYCWNLQKRTRGRRQAASLQPGISEDLKKVKEGMGIASSDEVDFLVLLDNMAAEQVHSLPSCPTLKRFAWMIEQRAVDTALYILQWEDREGLQMAVGPFLHILESNLLKVVDPATPPSKTRKLYLYAAHDVTLMPLLMTLGIFDHKWPPFAVDLTMELYQHRESKEWFVQLYYRGKEQVPKGCPDGLCPLDKFLNTISVYTLSPEKYHMLCSEAQMMGLGNGE.

A mitochondrion-targeting transit peptide spans 1-32 (MISRVFKLRMWAPVGVLTSLTYCLHQRRVALA). The segment at 58-169 (RHGARSPLKP…VFIRSTNIYR (112 aa)) is substrate binding. H59 serves as the catalytic Nucleophile. Catalysis depends on D336, which acts as the Proton donor.

Belongs to the histidine acid phosphatase family. In terms of assembly, monomer. Detected in brain (at protein level).

It is found in the mitochondrion. The enzyme catalyses a phosphate monoester + H2O = an alcohol + phosphate. The catalysed reaction is 1-(9Z-octadecenoyl)-sn-glycero-3-phosphate + H2O = 1-(9Z-octadecenoyl)-sn-glycerol + phosphate. Hydrolyzes lysophosphatidic acid (LPA) containing a medium length fatty acid chain to the corresponding monoacylglycerol. Has highest activity with lysophosphatidic acid containing myristate (C14:0), monounsaturated oleate (C18:1) or palmitate (C16:0), and lower activity with C18:0 and C6:0 lysophosphatidic acid. The sequence is that of Lysophosphatidic acid phosphatase type 6 (ACP6) from Bos taurus (Bovine).